Here is a 118-residue protein sequence, read N- to C-terminus: 5-hydroxyisourate hydrolase (118 aa).

Substrate contacts are provided by His11, Arg51, and Tyr115.

The protein belongs to the transthyretin family. 5-hydroxyisourate hydrolase subfamily. In terms of assembly, homotetramer.

The protein resides in the peroxisome. It catalyses the reaction 5-hydroxyisourate + H2O = 5-hydroxy-2-oxo-4-ureido-2,5-dihydro-1H-imidazole-5-carboxylate + H(+). The protein operates within purine metabolism; urate degradation; (S)-allantoin from urate: step 2/3. In terms of biological role, catalyzes the hydrolysis of 5-hydroxyisourate (HIU) to 2-oxo-4-hydroxy-4-carboxy-5-ureidoimidazoline (OHCU). This is 5-hydroxyisourate hydrolase (Urah) from Mus musculus (Mouse).